A 431-amino-acid chain; its full sequence is Gamma-glutamyl phosphate reductase (431 aa).

Belongs to the gamma-glutamyl phosphate reductase family.

The protein localises to the cytoplasm. The catalysed reaction is L-glutamate 5-semialdehyde + phosphate + NADP(+) = L-glutamyl 5-phosphate + NADPH + H(+). The protein operates within amino-acid biosynthesis; L-proline biosynthesis; L-glutamate 5-semialdehyde from L-glutamate: step 2/2. Its function is as follows. Catalyzes the NADPH-dependent reduction of L-glutamate 5-phosphate into L-glutamate 5-semialdehyde and phosphate. The product spontaneously undergoes cyclization to form 1-pyrroline-5-carboxylate. The protein is Gamma-glutamyl phosphate reductase of Acetivibrio thermocellus (strain ATCC 27405 / DSM 1237 / JCM 9322 / NBRC 103400 / NCIMB 10682 / NRRL B-4536 / VPI 7372) (Clostridium thermocellum).